The primary structure comprises 704 residues: DNA ligase (704 aa).

Residues 58 to 62 (DYEYD), 107 to 108 (SL), and Glu138 each bind NAD(+). Lys140 serves as the catalytic N6-AMP-lysine intermediate. Arg161, Glu199, Lys323, and Lys347 together coordinate NAD(+). Zn(2+) contacts are provided by Cys441, Cys444, Cys459, and Cys464. The BRCT domain maps to 621–704 (EKKGKLAGLN…LKLIGGENTE (84 aa)).

It belongs to the NAD-dependent DNA ligase family. LigA subfamily. The cofactor is Mg(2+). Requires Mn(2+) as cofactor.

The catalysed reaction is NAD(+) + (deoxyribonucleotide)n-3'-hydroxyl + 5'-phospho-(deoxyribonucleotide)m = (deoxyribonucleotide)n+m + AMP + beta-nicotinamide D-nucleotide.. DNA ligase that catalyzes the formation of phosphodiester linkages between 5'-phosphoryl and 3'-hydroxyl groups in double-stranded DNA using NAD as a coenzyme and as the energy source for the reaction. It is essential for DNA replication and repair of damaged DNA. This chain is DNA ligase, found in Sulfurihydrogenibium sp. (strain YO3AOP1).